A 511-amino-acid polypeptide reads, in one-letter code: 2,3-bisphosphoglycerate-independent phosphoglycerate mutase (511 aa).

Aspartate 12 lines the Mn(2+) pocket. Tyrosine 36 carries the phosphotyrosine modification. Serine 62 lines the Mn(2+) pocket. Serine 62 functions as the Phosphoserine intermediate in the catalytic mechanism. Substrate is bound by residues histidine 123, 153–154 (RD), arginine 185, arginine 191, 261–264 (RPDR), and lysine 336. Mn(2+) contacts are provided by aspartate 403, histidine 407, aspartate 444, histidine 445, and histidine 462.

This sequence belongs to the BPG-independent phosphoglycerate mutase family. As to quaternary structure, monomer. Requires Mn(2+) as cofactor.

It carries out the reaction (2R)-2-phosphoglycerate = (2R)-3-phosphoglycerate. It functions in the pathway carbohydrate degradation; glycolysis; pyruvate from D-glyceraldehyde 3-phosphate: step 3/5. Its activity is regulated as follows. Could be inhibited during sporulation by acidification of the forespore, thus allowing accumulation of the spore's large depot of 3-phosphoglyceric acid. Its function is as follows. Essential for rapid growth and for sporulation. Catalyzes the interconversion of 2-phosphoglycerate (2-PGA) and 3-phosphoglycerate (3-PGA). The chain is 2,3-bisphosphoglycerate-independent phosphoglycerate mutase from Geobacillus stearothermophilus (Bacillus stearothermophilus).